We begin with the raw amino-acid sequence, 658 residues long: Interferon-induced GTP-binding protein Mx1 (658 aa).

M1 is modified (N-acetylmethionine). The disordered stretch occupies residues 1–20 (MVNSKGKITDSDPGSSHLLL). One can recognise a Dynamin-type G domain in the interval 65–338 (DLALPAIAVI…LITHICKTLP (274 aa)). Residues 75 to 82 (GDQSSGKS) form a G1 motif region. 75 to 82 (GDQSSGKS) provides a ligand contact to GTP. The interval 100-102 (VTR) is G2 motif. A G3 motif region spans residues 176–179 (DLPG). Residues 176 to 180 (DLPGI) and 245 to 248 (TKPD) contribute to the GTP site. Residues 245–248 (TKPD) are G4 motif. The tract at residues 277-280 (KCRG) is G5 motif. The tract at residues 339–364 (LLEKQIKENYEKITEELQKYGSDVPE) is bundle signaling element (BSE). Positions 364–531 (EEEHEKMFFL…HFQMEQIVYC (168 aa)) are middle domain. A stalk region spans residues 365 to 628 (EEHEKMFFLI…KDTHNWLLKE (264 aa)). Positions 551–554 (KDKK) are critical for lipid-binding. One can recognise a GED domain in the interval 570–658 (LSDIFEHLLA…ARRRLAKFPG (89 aa)).

It belongs to the TRAFAC class dynamin-like GTPase superfamily. Dynamin/Fzo/YdjA family. In terms of assembly, homooligomer. Oligomerizes into multimeric filamentous or ring-like structures by virtue of its stalk domain. Oligomerization is critical for GTPase activity, protein stability, and recognition of viral target structures. Interacts with TRPC1, TRPC3, TRPC4, TRPC5, TRPC6 and TRPC7. Interacts with HSPA5. Interacts with TUBB/TUBB5. Interacts with DDX39A and DDX39B. Post-translationally, ISGylated.

The protein localises to the cytoplasm. It is found in the endoplasmic reticulum membrane. It localises to the perinuclear region. In terms of biological role, interferon-induced dynamin-like GTPase with antiviral activity. The protein is Interferon-induced GTP-binding protein Mx1 (MX1) of Otaria byronia (South American sea lion).